The following is an 82-amino-acid chain: Putative ribonuclease VapC34 (82 aa).

Residue Asp4 participates in Mg(2+) binding.

The protein belongs to the PINc/VapC protein family. Mg(2+) serves as cofactor.

Its function is as follows. Toxic component of a possible type II toxin-antitoxin (TA) system. A putative RNase. Its cognate antitoxin is VapB34. The sequence is that of Putative ribonuclease VapC34 (vapC34) from Mycobacterium tuberculosis (strain CDC 1551 / Oshkosh).